A 129-amino-acid polypeptide reads, in one-letter code: MDKKAIFDSVSNMEEQIGELYQQLGDLKTNLGEMLEENNRLNLENEHLRRRLSLTDEVAPEPVAEEEAVHGVMAPNRKEAMQQMIELGEGYDNLVQLYKEGFHVCNVHFGSPRGNDEDCLFCLSLLNKK.

The Zn(2+) site is built by H103, C105, C119, and C122.

It belongs to the YabA family. Homotetramer. Interacts with both DnaA and DnaN, acting as a bridge between these two proteins. Requires Zn(2+) as cofactor.

Its subcellular location is the cytoplasm. It is found in the nucleoid. Functionally, involved in control of chromosome replication initiation. Inhibits the cooperative binding of DnaA to the oriC region, thus negatively regulating initiation of chromosome replication. Inhibits the ability of DnaA-ATP to form a helix on DNA; does not disassemble preformed DnaA-DNA helices. Decreases the residence time of DnaA on the chromosome at its binding sites (oriC, replication forks and promoter-binding sites). Tethers DnaA to the replication machinery via the DNA polymerase beta sliding clamp subunit (dnaN). Associates with oriC and other DnaA targets on the chromosome in a DnaA-dependent manner. In Listeria innocua serovar 6a (strain ATCC BAA-680 / CLIP 11262), this protein is Replication initiation control protein YabA.